Reading from the N-terminus, the 148-residue chain is Large ribosomal subunit protein bL9 (148 aa).

It belongs to the bacterial ribosomal protein bL9 family.

Functionally, binds to the 23S rRNA. The sequence is that of Large ribosomal subunit protein bL9 from Pseudomonas fluorescens (strain ATCC BAA-477 / NRRL B-23932 / Pf-5).